The primary structure comprises 89 residues: Small ribosomal subunit protein uS15 (89 aa).

The protein belongs to the universal ribosomal protein uS15 family. Part of the 30S ribosomal subunit. Forms a bridge to the 50S subunit in the 70S ribosome, contacting the 23S rRNA.

Functionally, one of the primary rRNA binding proteins, it binds directly to 16S rRNA where it helps nucleate assembly of the platform of the 30S subunit by binding and bridging several RNA helices of the 16S rRNA. Its function is as follows. Forms an intersubunit bridge (bridge B4) with the 23S rRNA of the 50S subunit in the ribosome. The polypeptide is Small ribosomal subunit protein uS15 (Histophilus somni (strain 129Pt) (Haemophilus somnus)).